The chain runs to 94 residues: Large ribosomal subunit protein bL25 (94 aa).

The protein belongs to the bacterial ribosomal protein bL25 family. Part of the 50S ribosomal subunit; part of the 5S rRNA/L5/L18/L25 subcomplex. Contacts the 5S rRNA. Binds to the 5S rRNA independently of L5 and L18.

Functionally, this is one of the proteins that binds to the 5S RNA in the ribosome where it forms part of the central protuberance. This chain is Large ribosomal subunit protein bL25, found in Klebsiella pneumoniae subsp. pneumoniae (strain ATCC 700721 / MGH 78578).